Reading from the N-terminus, the 176-residue chain is Large ribosomal subunit protein uL6 (176 aa).

It belongs to the universal ribosomal protein uL6 family. As to quaternary structure, part of the 50S ribosomal subunit.

Its function is as follows. This protein binds to the 23S rRNA, and is important in its secondary structure. It is located near the subunit interface in the base of the L7/L12 stalk, and near the tRNA binding site of the peptidyltransferase center. In Lactobacillus delbrueckii subsp. bulgaricus (strain ATCC 11842 / DSM 20081 / BCRC 10696 / JCM 1002 / NBRC 13953 / NCIMB 11778 / NCTC 12712 / WDCM 00102 / Lb 14), this protein is Large ribosomal subunit protein uL6.